The chain runs to 608 residues: Actin-related protein 8 (608 aa).

A disordered region spans residues 1 to 20 (MQRSRASSTSSGRLQASQQV). Residue 272–275 (DIGA) participates in ATP binding.

The protein belongs to the actin family. ARP8 subfamily. In terms of assembly, component of the chromatin remodeling Ino80 complex. Exists as monomers and dimers, but the dimer is most probably the biologically relevant form required for stable interactions with histones that exploits the twofold symmetry of the nucleosome core.

The protein localises to the nucleus. Functionally, plays an important role in the functional organization of mitotic chromosomes. Exhibits low basal ATPase activity, and unable to polymerize. Proposed core component of the chromatin remodeling INO80 complex which is involved in transcriptional regulation, DNA replication and probably DNA repair. Strongly prefer nucleosomes and H3-H4 tetramers over H2A-H2B dimers, suggesting it may act as a nucleosome recognition module within the complex. In Drosophila pseudoobscura pseudoobscura (Fruit fly), this protein is Actin-related protein 8.